Consider the following 302-residue polypeptide: Methionyl-tRNA formyltransferase (302 aa).

108 to 111 (SILP) contributes to the (6S)-5,6,7,8-tetrahydrofolate binding site.

Belongs to the Fmt family.

It catalyses the reaction L-methionyl-tRNA(fMet) + (6R)-10-formyltetrahydrofolate = N-formyl-L-methionyl-tRNA(fMet) + (6S)-5,6,7,8-tetrahydrofolate + H(+). Its function is as follows. Attaches a formyl group to the free amino group of methionyl-tRNA(fMet). The formyl group appears to play a dual role in the initiator identity of N-formylmethionyl-tRNA by promoting its recognition by IF2 and preventing the misappropriation of this tRNA by the elongation apparatus. The sequence is that of Methionyl-tRNA formyltransferase from Sulfurimonas denitrificans (strain ATCC 33889 / DSM 1251) (Thiomicrospira denitrificans (strain ATCC 33889 / DSM 1251)).